The sequence spans 223 residues: Deoxyribose-phosphate aldolase (223 aa).

The Proton donor/acceptor role is filled by Asp-89. Lys-154 acts as the Schiff-base intermediate with acetaldehyde in catalysis. The active-site Proton donor/acceptor is Lys-183.

This sequence belongs to the DeoC/FbaB aldolase family. DeoC type 1 subfamily.

It is found in the cytoplasm. The catalysed reaction is 2-deoxy-D-ribose 5-phosphate = D-glyceraldehyde 3-phosphate + acetaldehyde. It functions in the pathway carbohydrate degradation; 2-deoxy-D-ribose 1-phosphate degradation; D-glyceraldehyde 3-phosphate and acetaldehyde from 2-deoxy-alpha-D-ribose 1-phosphate: step 2/2. Functionally, catalyzes a reversible aldol reaction between acetaldehyde and D-glyceraldehyde 3-phosphate to generate 2-deoxy-D-ribose 5-phosphate. The sequence is that of Deoxyribose-phosphate aldolase from Thermoanaerobacter pseudethanolicus (strain ATCC 33223 / 39E) (Clostridium thermohydrosulfuricum).